Here is a 279-residue protein sequence, read N- to C-terminus: Beta-porphyranase E (279 aa).

An N-terminal signal peptide occupies residues 1-18; it reads MGNTMLLTLLLVVVAAYG. One can recognise a GH16 domain in the interval 19-277; that stretch reads QTPPPPEGFR…WVRSYTLLPV (259 aa). Substrate contacts are provided by Trp-56, Arg-60, Glu-141, Glu-146, and Glu-243. Glu-141 serves as the catalytic Nucleophile. Catalysis depends on Glu-146, which acts as the Proton donor.

Belongs to the glycosyl hydrolase 16 family.

The protein localises to the periplasm. The catalysed reaction is Hydrolysis of beta-D-galactopyranose-(1-&gt;4)-alpha-L-galactopyranose-6-sulfate linkages in porphyran.. Its function is as follows. Cleaves the sulfated polysaccharide porphyran at the (1-&gt;4) linkages between beta-D-galactopyranose and alpha-L-galactopyranose-6-sulfate, forming mostly the disaccharide alpha-L-galactopyranose-6-sulfate-(1-&gt;3)-beta-D-galactose. The polypeptide is Beta-porphyranase E (porE) (Zobellia galactanivorans (strain DSM 12802 / CCUG 47099 / CIP 106680 / NCIMB 13871 / Dsij)).